Here is a 508-residue protein sequence, read N- to C-terminus: H/ACA ribonucleoprotein complex subunit 4 (508 aa).

The disordered stretch occupies residues 1–29 (MADVEVRKEKKKKKIKEEPLDGDDIGTLQ). Residue aspartate 123 is the Nucleophile of the active site. The PUA domain maps to 294-369 (HKRIIMKDSS…VVAKIKRVIM (76 aa)). Positions 423-508 (AAQEVSPTNG…KDRDRDEAQE (86 aa)) are disordered. Serine 442 is modified (phosphoserine). A compositionally biased stretch (low complexity) spans 442–457 (STSSVEETAAAAVSEE). Threonine 443 is modified (phosphothreonine). Serine 444 and serine 445 each carry phosphoserine. Threonine 449 carries the post-translational modification Phosphothreonine. Serine 455 bears the Phosphoserine mark. Residue threonine 458 is modified to Phosphothreonine. Residues 475-485 (EAPEAAEEEAE) are compositionally biased toward acidic residues. The segment covering 499 to 508 (KDRDRDEAQE) has biased composition (basic and acidic residues).

Belongs to the pseudouridine synthase TruB family. As to quaternary structure, component of the box H/ACA small nucleolar ribonucleoprotein (H/ACA snoRNP) complex consisting of Nop60B, Gar1, NPH2 and Nop10, and associated with H/ACA-type snoRNAs. In terms of tissue distribution, expressed at higher levels in females than in males. As to expression, expressed almost exclusively in females with high levels of expression in the ovary.

The protein localises to the nucleus. The protein resides in the nucleolus. The enzyme catalyses a uridine in RNA = a pseudouridine in RNA. Catalytic subunit of the box H/ACA small nucleolar ribonucleoprotein (H/ACA snoRNP) complex, which catalyzes pseudouridylation of rRNA. This involves the isomerization of uridine such that the ribose is subsequently attached to C5, instead of the normal N1. Pseudouridine ('psi') residues may serve to stabilize the conformation of rRNAs. Required for ribosome biogenesis; plays a central role in ribosomal RNA processing. H/ACA snoRNP complex-dependent ribosome biogenesis is important in female germline cell differentiation during oogenesis. Essential for viability and female fertility. Required for maintenance of the germline stem cell lineage during spermatogenesis. The protein is H/ACA ribonucleoprotein complex subunit 4 of Drosophila melanogaster (Fruit fly).